Reading from the N-terminus, the 157-residue chain is Small ribosomal subunit protein uS7 (157 aa).

The protein belongs to the universal ribosomal protein uS7 family. In terms of assembly, part of the 30S ribosomal subunit. Contacts proteins S9 and S11.

In terms of biological role, one of the primary rRNA binding proteins, it binds directly to 16S rRNA where it nucleates assembly of the head domain of the 30S subunit. Is located at the subunit interface close to the decoding center, probably blocks exit of the E-site tRNA. The protein is Small ribosomal subunit protein uS7 of Borreliella afzelii (strain PKo) (Borrelia afzelii).